Consider the following 571-residue polypeptide: 15-cis-phytoene desaturase, chloroplastic/chromoplastic (571 aa).

The transit peptide at 1 to 96 directs the protein to the chloroplast and chromoplast; sequence MDTGCLSSMN…FRNSERPSKP (96 aa). FAD is bound by residues A107, 126–127, K134, 151–152, and Y157; these read EA and HI. Substrate is bound at residue R292. Residues I334 and D523 each contribute to the FAD site. A531 lines the substrate pocket. An FAD-binding site is contributed by M533.

It belongs to the carotenoid/retinoid oxidoreductase family. Homotetramer. It depends on FAD as a cofactor.

The protein resides in the plastid. The protein localises to the chloroplast. It is found in the chromoplast. It localises to the membrane. It catalyses the reaction 2 a plastoquinone + 15-cis-phytoene = 9,9',15-tri-cis-zeta-carotene + 2 a plastoquinol. The protein operates within carotenoid biosynthesis; lycopene biosynthesis. Converts phytoene into zeta-carotene via the intermediary of phytofluene by the symmetrical introduction of two double bonds at the C-11 and C-11' positions of phytoene with a concomitant isomerization of two neighboring double bonds at the C9 and C9' positions from trans to cis. This is 15-cis-phytoene desaturase, chloroplastic/chromoplastic (PDS1) from Zea mays (Maize).